Here is a 469-residue protein sequence, read N- to C-terminus: UDP-N-acetylmuramate--L-alanine ligase (469 aa).

118 to 124 (GTHGKTT) provides a ligand contact to ATP.

It belongs to the MurCDEF family.

Its subcellular location is the cytoplasm. It carries out the reaction UDP-N-acetyl-alpha-D-muramate + L-alanine + ATP = UDP-N-acetyl-alpha-D-muramoyl-L-alanine + ADP + phosphate + H(+). The protein operates within cell wall biogenesis; peptidoglycan biosynthesis. In terms of biological role, cell wall formation. The chain is UDP-N-acetylmuramate--L-alanine ligase from Lachnoclostridium phytofermentans (strain ATCC 700394 / DSM 18823 / ISDg) (Clostridium phytofermentans).